A 270-amino-acid chain; its full sequence is tRNA pseudouridine synthase A (270 aa).

Catalysis depends on Asp-60, which acts as the Nucleophile. Tyr-118 provides a ligand contact to substrate.

Belongs to the tRNA pseudouridine synthase TruA family. In terms of assembly, homodimer.

It catalyses the reaction uridine(38/39/40) in tRNA = pseudouridine(38/39/40) in tRNA. Functionally, formation of pseudouridine at positions 38, 39 and 40 in the anticodon stem and loop of transfer RNAs. This Salmonella agona (strain SL483) protein is tRNA pseudouridine synthase A.